Reading from the N-terminus, the 1020-residue chain is Mediator of RNA polymerase II transcription subunit 16 (1020 aa).

This sequence belongs to the Mediator complex subunit 16 family. Component of the Mediator complex.

It is found in the nucleus. Its function is as follows. Component of the Mediator complex, a coactivator involved in the regulated transcription of nearly all RNA polymerase II-dependent genes. Mediator functions as a bridge to convey information from gene-specific regulatory proteins to the basal RNA polymerase II transcription machinery. Mediator is recruited to promoters by direct interactions with regulatory proteins and serves as a scaffold for the assembly of a functional preinitiation complex with RNA polymerase II and the general transcription factors. The chain is Mediator of RNA polymerase II transcription subunit 16 (SIN4) from Scheffersomyces stipitis (strain ATCC 58785 / CBS 6054 / NBRC 10063 / NRRL Y-11545) (Yeast).